Here is a 310-residue protein sequence, read N- to C-terminus: Antiviral protein II/III (310 aa).

An N-terminal signal peptide occupies residues Met1–Ser25. Cystine bridges form between Cys57/Cys284 and Cys106/Cys123. Residue Tyr94 is part of the active site. Active-site residues include Tyr142, Glu197, and Arg200.

The protein belongs to the ribosome-inactivating protein family. Type 1 RIP subfamily. PAP-II is expressed in early summer leaves (at protein level). PAP-III is expressed in late summer leaves (at protein level).

The catalysed reaction is Endohydrolysis of the N-glycosidic bond at one specific adenosine on the 28S rRNA.. Possesses antiviral potency. Inhibits viral infection of plants (tobacco mosaic virus). Inhibits protein synthesis in both prokaryotes and eukaryotes. The sequence is that of Antiviral protein II/III (PAP2) from Phytolacca americana (American pokeweed).